Reading from the N-terminus, the 69-residue chain is Ubiquitin-ribosomal protein eL40 fusion protein (69 aa).

The Ubiquitin-like domain occupies 1 to 17; sequence NIQKESTLHLVLRLRGG. Residue lysine 4 forms a Glycyl lysine isopeptide (Lys-Gly) (interchain with G-Cter in ubiquitin) linkage. Residue glycine 17 forms a Glycyl lysine isopeptide (Gly-Lys) (interchain with K-? in acceptor proteins) linkage. N6,N6,N6-trimethyllysine is present on lysine 39.

In the N-terminal section; belongs to the ubiquitin family. The protein in the C-terminal section; belongs to the eukaryotic ribosomal protein eL40 family. Part of the 60S ribosomal subunit. In terms of processing, trimethylation of Lys-39 ('Lys-22' of the mature chain) by SMYD5 promotes translation elongation and protein synthesis.

It is found in the cytoplasm. Its subcellular location is the nucleus. In terms of biological role, exists either covalently attached to another protein, or free (unanchored). When covalently bound, it is conjugated to target proteins via an isopeptide bond either as a monomer (monoubiquitin), a polymer linked via different Lys residues of the ubiquitin (polyubiquitin chains) or a linear polymer linked via the initiator Met of the ubiquitin (linear polyubiquitin chains). Polyubiquitin chains, when attached to a target protein, have different functions depending on the Lys residue of the ubiquitin that is linked: Lys-6-linked may be involved in DNA repair; Lys-11-linked is involved in ERAD (endoplasmic reticulum-associated degradation) and in cell-cycle regulation; Lys-29-linked is involved in proteotoxic stress response and cell cycle; Lys-33-linked is involved in kinase modification; Lys-48-linked is involved in protein degradation via the proteasome; Lys-63-linked is involved in endocytosis, DNA-damage responses as well as in signaling processes leading to activation of the transcription factor NF-kappa-B. Linear polymer chains formed via attachment by the initiator Met lead to cell signaling. Ubiquitin is usually conjugated to Lys residues of target proteins, however, in rare cases, conjugation to Cys or Ser residues has been observed. When polyubiquitin is free (unanchored-polyubiquitin), it also has distinct roles, such as in activation of protein kinases, and in signaling. Its function is as follows. Component of the 60S subunit of the ribosome. The chain is Ubiquitin-ribosomal protein eL40 fusion protein (UBA52) from Gallus gallus (Chicken).